The following is a 429-amino-acid chain: Histidine--tRNA ligase (429 aa).

Belongs to the class-II aminoacyl-tRNA synthetase family. Homodimer.

It localises to the cytoplasm. The catalysed reaction is tRNA(His) + L-histidine + ATP = L-histidyl-tRNA(His) + AMP + diphosphate + H(+). The polypeptide is Histidine--tRNA ligase (Oceanobacillus iheyensis (strain DSM 14371 / CIP 107618 / JCM 11309 / KCTC 3954 / HTE831)).